Consider the following 791-residue polypeptide: Phosphoenolpyruvate synthase (791 aa).

A Phosphothreonine modification is found at T416. The Tele-phosphohistidine intermediate role is filled by H418. Positions 508, 575, 677, 698, 699, 700, and 701 each coordinate substrate. E677 contributes to the Mg(2+) binding site. D701 contacts Mg(2+). Y744 is subject to Phosphotyrosine. C748 functions as the Proton donor in the catalytic mechanism.

This sequence belongs to the PEP-utilizing enzyme family. Mg(2+) is required as a cofactor.

It carries out the reaction pyruvate + ATP + H2O = phosphoenolpyruvate + AMP + phosphate + 2 H(+). Its pathway is carbohydrate biosynthesis; gluconeogenesis. In terms of biological role, catalyzes the phosphorylation of pyruvate to phosphoenolpyruvate. The polypeptide is Phosphoenolpyruvate synthase (ppsA) (Pseudomonas aeruginosa (strain UCBPP-PA14)).